A 1255-amino-acid chain; its full sequence is Mucin-1 (1255 aa).

The first 23 residues, 1-23 (MTPGTQSPFFLLLLLTVLTVVTG), serve as a signal peptide directing secretion. The disordered stretch occupies residues 23–1033 (GSGHASSTPG…PLTSSNHSTS (1011 aa)). The Extracellular portion of the chain corresponds to 24 to 1158 (SGHASSTPGG…SAQSGAGVPG (1135 aa)). Over residues 38-54 (SATQRSSVPSSTEKNAV) the composition is skewed to polar residues. Over residues 55 to 75 (SMTSSVLSSHSPGSGSSTTQG) the composition is skewed to low complexity. One copy of the 1; approximate repeat lies at 61–80 (LSSHSPGSGSSTTQGQDVTL). One copy of the 2; approximate repeat lies at 81-100 (APATEPASGSAATWGQDVTS). The span at 90–102 (SAATWGQDVTSVP) shows a compositional bias: polar residues. 43 repeat units span residues 101–120 (VPVTRPALGSTTPPAHDVTS), 121–140 (APDNKPAPGSTAPPAHGVTS), 141–160 (APDTRPAPGSTAPPAHGVTS), 161–180 (APDTRPAPGSTAPPAHGVTS), 181–200 (APDTRPAPGSTAPPAHGVTS), 201–220 (APDTRPAPGSTAPPAHGVTS), 221–240 (APDTRPAPGSTAPPAHGVTS), 241–260 (APDTRPAPGSTAPPAHGVTS), 261–280 (APDTRPAPGSTAPPAHGVTS), 281–300 (APDTRPAPGSTAPPAHGVTS), 301–320 (APDTRPAPGSTAPPAHGVTS), 321–340 (APDTRPAPGSTAPPAHGVTS), 341–360 (APDTRPAPGSTAPPAHGVTS), 361–380 (APDTRPAPGSTAPPAHGVTS), 381–400 (APDTRPAPGSTAPPAHGVTS), 401–420 (APDTRPAPGSTAPPAHGVTS), 421–440 (APDTRPAPGSTAPPAHGVTS), 441–460 (APDTRPAPGSTAPPAHGVTS), 461–480 (APDTRPAPGSTAPPAHGVTS), 481–500 (APDTRPAPGSTAPPAHGVTS), 501–520 (APDTRPAPGSTAPPAHGVTS), 521–540 (APDTRPAPGSTAPPAHGVTS), 541–560 (APDTRPAPGSTAPPAHGVTS), 561–580 (APDTRPAPGSTAPPAHGVTS), 581–600 (APDTRPAPGSTAPPAHGVTS), 601–620 (APDTRPAPGSTAPPAHGVTS), 621–640 (APDTRPAPGSTAPPAHGVTS), 641–660 (APDTRPAPGSTAPPAHGVTS), 661–680 (APDTRPAPGSTAPPAHGVTS), 681–700 (APDTRPAPGSTAPPAHGVTS), 701–720 (APDTRPAPGSTAPPAHGVTS), 721–740 (APDTRPAPGSTAPPAHGVTS), 741–760 (APDTRPAPGSTAPPAHGVTS), 761–780 (APDTRPAPGSTAPPAHGVTS), 781–800 (APDTRPAPGSTAPPAHGVTS), 801–820 (APDTRPAPGSTAPPAHGVTS), 821–840 (APDTRPAPGSTAPPAHGVTS), 841–860 (APDTRPAPGSTAPPAHGVTS), 861–880 (APDTRPAPGSTAPPAHGVTS), 881–900 (APDTRPAPGSTAPPAHGVTS), 901–920 (APDTRPAPGSTAPPAHGVTS), 921–940 (APDTRPAPGSTAPPAHGVTS), and 941–960 (APDNRPALGSTAPPVHNVTS). Residues 126 to 965 (PAPGSTAPPA…HNVTSASGSA (840 aa)) form a 42 X 20 AA approximate tandem repeats of P-A-P-G-S-T-A-P-P-A-H-G-V-T-S-A-P-D-T-R region. O-linked (GalNAc...) threonine glycans are attached at residues T131 and T139. S140 carries O-linked (GalNAc...) serine glycosylation. An O-linked (GalNAc...) threonine glycan is attached at T144. N-linked (GlcNAc...) asparagine glycosylation is present at N957. Residues 960-970 (SASGSASGSAS) are compositionally biased toward low complexity. The 46; approximate repeat unit spans residues 961–980 (ASGSASGSASTLVHNGTSAR). Composition is skewed to polar residues over residues 971 to 993 (TLVHNGTSARATTTPASKSTPFS) and 1001 to 1033 (TPTTLASHSTKTDASSTHHSSVPPLTSSNHSTS). An N-linked (GlcNAc...) asparagine glycan is attached at N975. The 47; approximate repeat unit spans residues 981–1000 (ATTTPASKSTPFSIPSHHSD). A 48; approximate repeat occupies 1001-1020 (TPTTLASHSTKTDASSTHHS). N-linked (GlcNAc...) asparagine glycosylation is found at N1029, N1055, and N1133. The SEA domain maps to 1039-1148 (GVSFFFLSFH…VSVSDVPFPF (110 aa)). Residues 1159–1181 (WGIALLVLVCVLVALAIVYLIAL) traverse the membrane as a helical segment. Over 1182–1255 (AVCQCRRKNY…PAVAATSANL (74 aa)) the chain is Cytoplasmic. S-palmitoyl cysteine attachment occurs at residues C1184 and C1186. The tract at residues 1192-1228 (GQLDIFPARDTYHPMSEYPTYHTHGRYVPPSSTDRSP) is interaction with P53. Residue Y1203 is modified to Phosphotyrosine; by PDGFR. The short motif at 1203–1206 (YHPM) is the Interaction with GRB2 element. Position 1212 is a phosphotyrosine (Y1212). The disordered stretch occupies residues 1214 to 1237 (THGRYVPPSSTDRSPYEKVSAGNG). Y1218 is modified (phosphotyrosine; by PDGFR). The interval 1223-1230 (STDRSPYE) is required for interaction with GSK3B. At T1224 the chain carries Phosphothreonine; by PKC/PRKCD. Phosphoserine; by GSK3-beta is present on S1227. A Phosphotyrosine; by CSK, EGFR and SRC modification is found at Y1229. The Interaction with SRC and ESR1 signature appears at 1229–1232 (YEKV). Residues 1233–1241 (SAGNGGSSL) form a required for interaction with beta- and gamma-catenins region. Y1243 bears the Phosphotyrosine mark. Positions 1243–1246 (YTNP) match the Required for interaction with AP1S2 motif.

The alpha subunit forms a tight, non-covalent heterodimeric complex with the proteolytically-released beta-subunit. Interaction, via the tandem repeat region, with domain 1 of ICAM1 is implicated in cell migration and metastases. Isoform 1 binds directly the SH2 domain of GRB2, and forms a MUC1/GRB2/SOS1 complex involved in RAS signaling. The cytoplasmic tail (MUC1CT) interacts with several proteins such as SRC, CTNNB1 and ERBs. Interaction with the SH2 domain of CSK decreases interaction with GSK3B. Interacts with CTNNB1/beta-catenin and JUP/gamma-catenin and promotes cell adhesion. Interaction with JUP/gamma-catenin is induced by heregulin. Binds PRKCD, ERBB2, ERBB3 and ERBB4. Heregulin (HRG) stimulates the interaction with ERBB2 and, to a much lesser extent, the interaction with ERBB3 and ERBB4. Interacts with P53 in response to DNA damage. Interacts with KLF4. Interacts with estrogen receptor alpha/ESR1, through its DNA-binding domain, and stimulates its transcription activity. Binds ADAM17. Isoform ZD forms disulfide-linked oligomers. In terms of processing, highly glycosylated (N- and O-linked carbohydrates and sialic acid). O-glycosylated to a varying degree on serine and threonine residues within each tandem repeat, ranging from mono- to penta-glycosylation. The average density ranges from about 50% in human milk to over 90% in T47D breast cancer cells. Further sialylation occurs during recycling. Membrane-shed glycoproteins from kidney and breast cancer cells have preferentially sialyated core 1 structures, while secreted forms from the same tissues display mainly core 2 structures. The O-glycosylated content is overlapping in both these tissues with terminal fucose and galactose, 2- and 3-linked galactose, 3- and 3,6-linked GalNAc-ol and 4-linked GlcNAc predominating. Differentially O-glycosylated in breast carcinomas with 3,4-linked GlcNAc. N-glycosylation consists of high-mannose, acidic complex-type and hybrid glycans in the secreted form MUC1/SEC, and neutral complex-type in the transmembrane form, MUC1/TM. Proteolytic cleavage in the SEA domain occurs in the endoplasmic reticulum by an autoproteolytic mechanism and requires the full-length SEA domain as well as requiring a Ser, Thr or Cys residue at the P + 1 site. Cleavage at this site also occurs on isoform MUC1/X but not on isoform MUC1/Y. Ectodomain shedding is mediated by ADAM17. Post-translationally, dual palmitoylation on cysteine residues in the CQC motif is required for recycling from endosomes back to the plasma membrane. In terms of processing, phosphorylated on tyrosines and serine residues in the C-terminal. Phosphorylation on tyrosines in the C-terminal increases the nuclear location of MUC1 and beta-catenin. Phosphorylation by PKC delta induces binding of MUC1 to beta-catenin/CTNNB1 and thus decreases the formation of the beta-catenin/E-cadherin complex. Src-mediated phosphorylation inhibits interaction with GSK3B. Src- and EGFR-mediated phosphorylation on Tyr-1229 increases binding to beta-catenin/CTNNB1. GSK3B-mediated phosphorylation on Ser-1227 decreases this interaction but restores the formation of the beta-cadherin/E-cadherin complex. On T-cell receptor activation, phosphorylated by LCK. PDGFR-mediated phosphorylation increases nuclear colocalization of MUC1CT and CTNNB1. The N-terminal sequence has been shown to begin at position 24 or 28. In terms of tissue distribution, expressed on the apical surface of epithelial cells, especially of airway passages, breast and uterus. Also expressed in activated and unactivated T-cells. Overexpressed in epithelial tumors, such as breast or ovarian cancer and also in non-epithelial tumor cells. Isoform Y is expressed in tumor cells only.

It localises to the apical cell membrane. The protein localises to the secreted. Its subcellular location is the cell membrane. It is found in the cytoplasm. The protein resides in the nucleus. The alpha subunit has cell adhesive properties. Can act both as an adhesion and an anti-adhesion protein. May provide a protective layer on epithelial cells against bacterial and enzyme attack. In terms of biological role, the beta subunit contains a C-terminal domain which is involved in cell signaling, through phosphorylations and protein-protein interactions. Modulates signaling in ERK, SRC and NF-kappa-B pathways. In activated T-cells, influences directly or indirectly the Ras/MAPK pathway. Promotes tumor progression. Regulates TP53-mediated transcription and determines cell fate in the genotoxic stress response. Binds, together with KLF4, the PE21 promoter element of TP53 and represses TP53 activity. This is Mucin-1 (MUC1) from Homo sapiens (Human).